Here is a 92-residue protein sequence, read N- to C-terminus: RNA-binding protein Hfq (92 aa).

A Sm domain is found at 11–71 (DRFLNHLRVN…ISTIIPSSYV (61 aa)).

It belongs to the Hfq family. In terms of assembly, homohexamer.

Its function is as follows. RNA chaperone that binds small regulatory RNA (sRNAs) and mRNAs to facilitate mRNA translational regulation in response to envelope stress, environmental stress and changes in metabolite concentrations. Also binds with high specificity to tRNAs. This is RNA-binding protein Hfq from Thermotoga maritima (strain ATCC 43589 / DSM 3109 / JCM 10099 / NBRC 100826 / MSB8).